The primary structure comprises 365 residues: Glutamate 5-kinase 1 (365 aa).

ATP is bound at residue Lys-9. Substrate-binding residues include Ser-49, Asp-136, and Asn-148. ATP-binding positions include 168-169 (TD) and 210-216 (TGGMKSK). The PUA domain maps to 276–353 (SGKITVDEGA…DEFHHEEGIE (78 aa)).

The protein belongs to the glutamate 5-kinase family.

The protein resides in the cytoplasm. It catalyses the reaction L-glutamate + ATP = L-glutamyl 5-phosphate + ADP. Its pathway is amino-acid biosynthesis; L-proline biosynthesis; L-glutamate 5-semialdehyde from L-glutamate: step 1/2. Functionally, catalyzes the transfer of a phosphate group to glutamate to form L-glutamate 5-phosphate. This is Glutamate 5-kinase 1 from Bacillus licheniformis (strain ATCC 14580 / DSM 13 / JCM 2505 / CCUG 7422 / NBRC 12200 / NCIMB 9375 / NCTC 10341 / NRRL NRS-1264 / Gibson 46).